The primary structure comprises 414 residues: Meiotic driver wtf19 (414 aa).

The disordered stretch occupies residues 1–94 (MKNKYYPVRT…RENHSSGTAD (94 aa)). Residues 11–29 (SMDEMNAKNDNEIDLEKGP) are compositionally biased toward basic and acidic residues. Residues 57–72 (GANNPNLFNTDESTTP) show a composition bias toward polar residues. Transmembrane regions (helical) follow at residues 99–119 (FLIK…PAVC), 136–156 (WVYF…LWCF), 170–190 (VTVI…AQCV), 192–212 (VTAI…AQCV), 222–242 (CVKV…IGLF), 247–267 (EMMI…FGCV), 284–304 (TISA…WTLW), 311–331 (LQVL…MSLF), and 339–359 (GYEI…LYEM).

This sequence belongs to the WTF family. In terms of assembly, homomer. Forms protein aggregates. The two isoforms can interact with each other and with themselves. High sequence similarity is required for their interaction.

Its subcellular location is the spore membrane. The protein localises to the vacuole membrane. The protein resides in the ascus epiplasm. It is found in the cytoplasm. It localises to the endoplasmic reticulum membrane. Functionally, promotes unequal transmission of alleles from the parental zygote to progeny spores by acting as poison/antidote system where the poison and antidote proteins are produced from the same locus; the poison component is trans-acting and targets all spores within an ascus whereas the antidote component is spore-specific, leading to poisoning of all progeny that do not inherit the allele. In terms of biological role, localizes isoform 2 to the vacuole thereby facilitating its degradation. Its function is as follows. Forms toxic aggregates that disrupt spore maturation. The sequence is that of Meiotic driver wtf19 from Schizosaccharomyces kambucha (Fission yeast).